The following is a 382-amino-acid chain: Saccharopine dehydrogenase [NAD(+), L-lysine-forming] (382 aa).

L-saccharopine is bound by residues Arg20 and Lys79. The active-site Proton acceptor is Lys79. The active-site Proton donor is His98. Gln103 contacts L-saccharopine. Residue Arg132 coordinates NAD(+). L-saccharopine-binding residues include Arg133 and Phe137. Residues 215-216, Asp239, Thr243, Tyr263, and Val290 each bind NAD(+); that span reads GR. Cys217 and Cys261 form a disulfide bridge. 291–293 is an L-saccharopine binding site; that stretch reads SAD. Position 330 to 333 (330 to 333) interacts with NAD(+); that stretch reads IDHL.

The protein belongs to the AlaDH/PNT family. Monomer.

The enzyme catalyses L-saccharopine + NAD(+) + H2O = L-lysine + 2-oxoglutarate + NADH + H(+). It participates in amino-acid biosynthesis; L-lysine biosynthesis via AAA pathway; L-lysine from L-alpha-aminoadipate (fungal route): step 3/3. Catalyzes the NAD(+)-dependent cleavage of saccharopine to L-lysine and 2-oxoglutarate, the final step in the alpha-aminoadipate (AAA) pathway for lysin biosynthesis. This Candida albicans (strain SC5314 / ATCC MYA-2876) (Yeast) protein is Saccharopine dehydrogenase [NAD(+), L-lysine-forming].